We begin with the raw amino-acid sequence, 251 residues long: Triosephosphate isomerase (251 aa).

Asparagine 9–lysine 11 contacts substrate. Histidine 95 serves as the catalytic Electrophile. Glutamate 167 acts as the Proton acceptor in catalysis. Residues glycine 173, serine 212, and glycine 233 to glycine 234 each bind substrate.

This sequence belongs to the triosephosphate isomerase family. As to quaternary structure, homodimer.

Its subcellular location is the cytoplasm. The catalysed reaction is D-glyceraldehyde 3-phosphate = dihydroxyacetone phosphate. It functions in the pathway carbohydrate biosynthesis; gluconeogenesis. The protein operates within carbohydrate degradation; glycolysis; D-glyceraldehyde 3-phosphate from glycerone phosphate: step 1/1. In terms of biological role, involved in the gluconeogenesis. Catalyzes stereospecifically the conversion of dihydroxyacetone phosphate (DHAP) to D-glyceraldehyde-3-phosphate (G3P). This Ectopseudomonas mendocina (strain ymp) (Pseudomonas mendocina) protein is Triosephosphate isomerase.